The chain runs to 200 residues: Small ribosomal subunit protein uS4 (200 aa).

Positions 20 to 41 (TGTGKELDKRPYAPGQHGPNQR) are disordered. The 61-residue stretch at 92–152 (SRLDNLVYRL…EKSKNLDVVK (61 aa)) folds into the S4 RNA-binding domain.

This sequence belongs to the universal ribosomal protein uS4 family. Part of the 30S ribosomal subunit. Contacts protein S5. The interaction surface between S4 and S5 is involved in control of translational fidelity.

Functionally, one of the primary rRNA binding proteins, it binds directly to 16S rRNA where it nucleates assembly of the body of the 30S subunit. In terms of biological role, with S5 and S12 plays an important role in translational accuracy. This is Small ribosomal subunit protein uS4 from Oceanobacillus iheyensis (strain DSM 14371 / CIP 107618 / JCM 11309 / KCTC 3954 / HTE831).